A 345-amino-acid chain; its full sequence is NADH-ubiquinone oxidoreductase chain 2 (345 aa).

The next 10 membrane-spanning stretches (helical) occupy residues M1–M21, H25–S45, Y59–Y79, I96–P116, P123–I143, L148–G168, I191–L211, T240–F260, H274–L294, and S324–I344.

The protein belongs to the complex I subunit 2 family.

The protein localises to the mitochondrion inner membrane. The enzyme catalyses a ubiquinone + NADH + 5 H(+)(in) = a ubiquinol + NAD(+) + 4 H(+)(out). Core subunit of the mitochondrial membrane respiratory chain NADH dehydrogenase (Complex I) that is believed to belong to the minimal assembly required for catalysis. Complex I functions in the transfer of electrons from NADH to the respiratory chain. The immediate electron acceptor for the enzyme is believed to be ubiquinone. In Varanus timorensis (Timor monitor), this protein is NADH-ubiquinone oxidoreductase chain 2 (MT-ND2).